The following is a 648-amino-acid chain: Beta-glucuronidase (648 aa).

An N-terminal signal peptide occupies residues 1–22 (MSPRRSVCWFVLGQLLCSCAVA). N-linked (GlcNAc...) asparagine glycans are attached at residues Asn172 and Asn416. Catalysis depends on Glu447, which acts as the Proton donor. Asn627 is a glycosylation site (N-linked (GlcNAc...) asparagine).

It belongs to the glycosyl hydrolase 2 family. Homotetramer. Post-translationally, undergoes a post-transcriptional proteolytic cleavage near its C-terminal end, which reduces its size by approximately 3 kDa. The site of this cleavage has as yet not been determined.

The protein resides in the lysosome. It carries out the reaction a beta-D-glucuronoside + H2O = D-glucuronate + an alcohol. Inhibited by L-aspartic acid. Plays an important role in the degradation of dermatan and keratan sulfates. This is Beta-glucuronidase (Gusb) from Rattus norvegicus (Rat).